Consider the following 435-residue polypeptide: Increased rDNA silencing protein 4 (435 aa).

4 disordered regions span residues 1-20 (MKIPVTADAESASKDGLQHD), 39-71 (ASIPLEKASFSRQAPSQNPSITAKPPIPPQRAA), 136-204 (ASKA…NHTL), and 233-277 (GSKR…PDEI). Positions 11-20 (SASKDGLQHD) are enriched in basic and acidic residues. The span at 48–59 (FSRQAPSQNPSI) shows a compositional bias: polar residues. 2 stretches are compositionally biased toward low complexity: residues 174–186 (SSQLSTESELLQL) and 249–265 (QRGSPSQPLLQLSSDSS). An EH domain is found at 327 to 435 (ERKRYEEVWE…VPKSVWKSVQ (109 aa)).

It belongs to the IRS4 family.

Functionally, positive regulator of phosphatidylinositol 4,5-bisphosphate turnover and negatively regulates signaling through the cell integrity pathway. Involved in rDNA silencing. In Coccidioides immitis (strain RS) (Valley fever fungus), this protein is Increased rDNA silencing protein 4 (IRS4).